A 582-amino-acid chain; its full sequence is uncharacterized protein (582 aa).

Residues 1-23 show a composition bias toward basic and acidic residues; that stretch reads MAHEGSRQVRDRGVTRSKAEKVR. Disordered stretches follow at residues 1–29, 110–133, and 147–221; these read MAHEGSRQVRDRGVTRSKAEKVRPPTVPV, AVAEDPTWGEDEEPSACTTDSWAQ, and LENF…SSAG. Position 242 is a phosphoserine (Ser242). 2 disordered regions span residues 310–331 and 551–582; these read RPSASCQQQRAGHSDVRLSAHH and LSSGVPEQEDKEGSTFPPVEQHPIQTGAPKPR. Residues 311–320 show a composition bias toward polar residues; that stretch reads PSASCQQQRA.

This is an uncharacterized protein from Homo sapiens (Human).